Reading from the N-terminus, the 141-residue chain is MLMPKRVKYRREHRGRMKGRAKGGTEVHFGEFGLQALESAWITNRQIEAARRAMTRYMRRGGKVWIRIFPSKPYTAKPLEVRMGSGKGAPEGWVAVVKPGKVMFEVGGVSEEVAREALRLASHKLPIKCKFVKREETGGEA.

The protein belongs to the universal ribosomal protein uL16 family. As to quaternary structure, part of the 50S ribosomal subunit.

Its function is as follows. Binds 23S rRNA and is also seen to make contacts with the A and possibly P site tRNAs. This chain is Large ribosomal subunit protein uL16, found in Geobacillus kaustophilus (strain HTA426).